The primary structure comprises 689 residues: MSEKTFLVEIGTEELPPKALRSLAESFAANFTAELDNAGLAHGNVEWFAAPRRLALKVANLAESQPDREVEKRGPAIAQAFDAEGKPSKAAEGWARGCGITVDQAERLKTDKGEWLLYRAHVKGESTEALVPNMVATSLAKLPIPKLMRWGASDVHFVRPVHTVTLLLGDKVIPATILGIQSDRVIRGHRFMGEPEFTIDNADQYPQILLEHGKVIADYEARKAKIKADAEEAARKIGGNADLSESLLEEVASLVEWPVVLTAKFEEKFLAVPAEALVYTMKGDQKYFPVYDNAGKLLPNFIFVANIESKDPTQIISGNEKVVRPRLADAEFFFNTDRKKRLEDHLPRLQTVLFQQQLGTLRDKTDRIQALAGWIAGQIGADVNHATRAGLLSKCDLMTNMVFEFTDTQGVMGMHYARHDGEAEDVAVALNEQYQPRFAGDDLPSNPVACALAIADKMDTLAGIFGIGQHPKGDKDPFALRRAALGVLRIIVEKNLALDLQTLTEEAVRLYGDKLTNANVVDDVIDFMLGRFRAWYQDEGYTVDTIQAVLARRPTRPADFDARMKAVSHFRTLEEASALAAANKRVSNILAKATEPLNDIVHASVLKEAAEIELARHLVVLRDKLQPYFADGRYQEALIELAALRAPVDEFFENVMVNAKEKDIRINRLTLLSKLRELFLQVADISLLQ.

It belongs to the class-II aminoacyl-tRNA synthetase family. In terms of assembly, tetramer of two alpha and two beta subunits.

The protein resides in the cytoplasm. The catalysed reaction is tRNA(Gly) + glycine + ATP = glycyl-tRNA(Gly) + AMP + diphosphate. This chain is Glycine--tRNA ligase beta subunit, found in Salmonella choleraesuis (strain SC-B67).